The sequence spans 105 residues: Small ribosomal subunit protein uS10 (105 aa).

This sequence belongs to the universal ribosomal protein uS10 family. As to quaternary structure, part of the 30S ribosomal subunit.

In terms of biological role, involved in the binding of tRNA to the ribosomes. The chain is Small ribosomal subunit protein uS10 from Anaplasma marginale (strain Florida).